Consider the following 115-residue polypeptide: Evasin P1183 (115 aa).

Residues M1–L25 form the signal peptide. 4 disulfides stabilise this stretch: C38-C58, C54-C94, C70-C99, and C89-C108. N45, N72, and N103 each carry an N-linked (GlcNAc...) asparagine glycan.

It localises to the secreted. Its function is as follows. Salivary chemokine-binding protein which binds to host chemokine CCL2. This is Evasin P1183 from Amblyomma triste (Neotropical tick).